Reading from the N-terminus, the 240-residue chain is NAD-dependent protein deacylase Sir2 (240 aa).

A Deacetylase sirtuin-type domain is found at 1-235 (MQVTVLSGAG…PTLLQRLPEL (235 aa)). Residue 8-28 (GAGISAESGVPTFRDAETGLW) coordinates NAD(+). Substrate-binding residues include Y53 and R56. 86 to 89 (QNID) serves as a coordination point for NAD(+). Catalysis depends on H104, which acts as the Proton acceptor. Zn(2+) contacts are provided by C112, C115, C138, and C140. Residues 177–179 (GTS), 203–205 (NPE), and A221 contribute to the NAD(+) site.

This sequence belongs to the sirtuin family. Class III subfamily. As to quaternary structure, interacts with both Ku and LigD; may form a trimeric complex during NHEJ. Zn(2+) serves as cofactor.

Its subcellular location is the cytoplasm. It carries out the reaction N(6)-succinyl-L-lysyl-[protein] + NAD(+) + H2O = 2''-O-succinyl-ADP-D-ribose + nicotinamide + L-lysyl-[protein]. The enzyme catalyses N(6)-acetyl-L-lysyl-[protein] + NAD(+) + H2O = 2''-O-acetyl-ADP-D-ribose + nicotinamide + L-lysyl-[protein]. Its function is as follows. NAD-dependent lysine deacetylase and desuccinylase that specifically removes acetyl and succinyl groups on target proteins. Modulates the activities of several proteins which are inactive in their acylated form. Involved in non-homologous end joining (NHEJ) repair of blunt, 5' overhang and 3' overhang DNA double strand breaks (DSB). Overexpression increases the efficiency of NHEJ of the above DSBs 2-fold with no effect on repair fidelity. The chain is NAD-dependent protein deacylase Sir2 (sir2) from Mycolicibacterium smegmatis (strain ATCC 700084 / mc(2)155) (Mycobacterium smegmatis).